The primary structure comprises 435 residues: Galactose/lactose metabolism regulatory protein GAL80 (435 aa).

M1 bears the N-acetylmethionine mark.

The protein to K.lactis GAL80. As to quaternary structure, monomer.

Functionally, this protein is a negative regulator for the gene expression of the lactose/galactose metabolic genes. It binds to GAL4 and so blocks transcriptional activation by it, in the absence of an inducing sugar. The chain is Galactose/lactose metabolism regulatory protein GAL80 (GAL80) from Saccharomyces cerevisiae (strain ATCC 204508 / S288c) (Baker's yeast).